The sequence spans 122 residues: Large ribosomal subunit protein bL12 (122 aa).

This sequence belongs to the bacterial ribosomal protein bL12 family. In terms of assembly, homodimer. Part of the ribosomal stalk of the 50S ribosomal subunit. Forms a multimeric L10(L12)X complex, where L10 forms an elongated spine to which 2 to 4 L12 dimers bind in a sequential fashion. Binds GTP-bound translation factors.

Functionally, forms part of the ribosomal stalk which helps the ribosome interact with GTP-bound translation factors. Is thus essential for accurate translation. This Acinetobacter baumannii (strain AB0057) protein is Large ribosomal subunit protein bL12.